The primary structure comprises 199 residues: Ribonuclease HII (199 aa).

The 199-residue stretch at 1 to 199 (MCVCGIDEAG…TYKNLVQGHI (199 aa)) folds into the RNase H type-2 domain. Positions 7, 8, and 97 each coordinate a divalent metal cation.

The protein belongs to the RNase HII family. Mn(2+) serves as cofactor. Requires Mg(2+) as cofactor.

It is found in the cytoplasm. The catalysed reaction is Endonucleolytic cleavage to 5'-phosphomonoester.. In terms of biological role, endonuclease that specifically degrades the RNA of RNA-DNA hybrids. This chain is Ribonuclease HII, found in Picrophilus torridus (strain ATCC 700027 / DSM 9790 / JCM 10055 / NBRC 100828 / KAW 2/3).